We begin with the raw amino-acid sequence, 1795 residues long: Type III effector AvrE (1795 aa).

Polar residues predominate over residues 1–18; that stretch reads MQSPSIHRNTGSIIQPTV. Residues 1-227 are disordered; the sequence is MQSPSIHRNT…PPREPMLWRS (227 aa). A compositionally biased stretch (low complexity) spans 60–75; that stretch reads KSKAPQQKAATPPTAK. 2 stretches are compositionally biased toward polar residues: residues 97–109 and 117–127; these read GFSN…THSA and HPNQASSSGAQ. Basic and acidic residues predominate over residues 129 to 154; that stretch reads HEIHPEAAPRKNLRVRFDLPQDRLER. Residues 174–191 are compositionally biased toward polar residues; sequence ATRQFRSPDSHLQGSDGT. A compositionally biased stretch (low complexity) spans 203 to 215; the sequence is PSSSGSKIGDSDG. 2 short sequence motifs (wxxxE) span residues 393-397 and 829-833; these read WKIPE and WQRFE. Residues 1461–1488 are disordered; it reads QIGGSHTAPTGTPASAPGPTPASQTAAN. Residues 1467–1487 are compositionally biased toward low complexity; the sequence is TAPTGTPASAPGPTPASQTAA. An ERMRS motif is present at residues 1787 to 1790; it reads KKEG.

It belongs to the AvrE family. In planta interaction assays, interacts with the A.thaliana protein phosphatase 2A (PP2A) via direct interaction/association with specific B' regulatory subunits.

It localises to the secreted. The protein resides in the host cell. Its subcellular location is the host cell membrane. Its activity is regulated as follows. Polyamidoamine dendrimers inhibit channel and virulence activities. Its function is as follows. Major virulence factor that may function as a water- and solute-permeable channel dedicated to creating osmotic/water potential perturbation and a water- and nutrient-rich apoplast in which bacteria multiply within the infected plant tissues. Expression in Xenopus oocytes results in inward and outward currents, permeability to water and osmolarity-dependent oocyte swelling and bursting. In terms of biological role, elicits cell death in host tomato leaves and in non-host Nicotiana tabacum leaves. Acts within plant cells and promotes lesion formation. The combined action of AvrE and HopM1 is particularly important in promoting bacterial growth in plants. Contributes to the down-regulation of a specific subset of A.thaliana genes during infection, including NHL13, which is required for antibacterial immunity. The polypeptide is Type III effector AvrE (Pseudomonas syringae pv. tomato (strain ATCC BAA-871 / DC3000)).